The chain runs to 409 residues: Glutamate--tRNA ligase 2 (409 aa).

The short motif at 9-19 is the 'HIGH' region element; that stretch reads PSPTGNLHIGG. A 'KMSKS' region motif is present at residues 198-202; sequence KLSKR. Residue Lys-201 coordinates ATP.

The protein belongs to the class-I aminoacyl-tRNA synthetase family. Glutamate--tRNA ligase type 1 subfamily. Monomer.

Its subcellular location is the cytoplasm. The enzyme catalyses tRNA(Glu) + L-glutamate + ATP = L-glutamyl-tRNA(Glu) + AMP + diphosphate. Functionally, catalyzes the attachment of glutamate to tRNA(Glu) in a two-step reaction: glutamate is first activated by ATP to form Glu-AMP and then transferred to the acceptor end of tRNA(Glu). The polypeptide is Glutamate--tRNA ligase 2 (Neorickettsia sennetsu (strain ATCC VR-367 / Miyayama) (Ehrlichia sennetsu)).